The chain runs to 621 residues: pH-response transcription factor pacc-1 (621 aa).

Positions 1–14 are enriched in polar residues; sequence MSSTPAQENGTVNG. The interval 1-87 is disordered; it reads MSSTPAQENG…PTTASNSSAP (87 aa). Residues 15-87 show a composition bias toward low complexity; it reads ANAAPAPAPA…PTTASNSSAP (73 aa). 3 consecutive C2H2-type zinc fingers follow at residues 95–120, 131–155, and 161–183; these read LVCR…CEKH, LTCQ…VRVH, and HKCD…VKTH. 2 disordered regions span residues 395–539 and 566–621; these read PTYA…PETY and DEDD…PRIN. Low complexity-rich tracts occupy residues 409–423 and 436–465; these read ASLA…PHSA and SYTS…VSYP. The YPX[LI] motif 1 motif lies at 464 to 467; it reads YPTL. Positions 476–486 are enriched in polar residues; sequence PSTSGLGSNFT. Over residues 502-511 the composition is skewed to basic and acidic residues; the sequence is RAADEADRAP. Over residues 515 to 525 the composition is skewed to polar residues; the sequence is ASEQATVSSPS. Positions 583 to 595 are enriched in low complexity; the sequence is RNQQQRNQQQQQQ. The YPX[LI] motif 2 signature appears at 614–617; the sequence is YPVL.

It belongs to the pacC/RIM101 family. As to quaternary structure, binds to DNA. Interacts with palA/prr-1, which binds to the two YPX[LI] motifs and is required for proteolytic processing. In terms of processing, activated by C-terminal proteolytic cleavage by signaling protease (probably palB/RIM13) at neutral to alkaline ambient pH.

It localises to the cytoplasm. Its subcellular location is the nucleus. Its function is as follows. Transcription factor that mediates regulation of both acid- and alkaline-expressed genes in response to ambient pH. At alkaline ambient pH, activates transcription of alkaline-expressed genes (including pacc-1 itself) and represses transcription of acid-expressed genes. The sequence is that of pH-response transcription factor pacc-1 (pacc-1) from Neurospora crassa (strain ATCC 24698 / 74-OR23-1A / CBS 708.71 / DSM 1257 / FGSC 987).